Consider the following 276-residue polypeptide: Secretagogin (276 aa).

6 consecutive EF-hand domains span residues 12–47 (LDAAGFWQIWQRFDADEKGYIEEKELDAFFHHVLTK), 58–93 (NVWKMKQQFMAAHDVSKDGHIQMKELACLFLSEDEN), 105–140 (DSSVEFMQIWRKYDADSSGFISAAELCNFLRDLFLH), 149–184 (KLEEYTGTMMKIFDKNKDGRLDLNDLARILALQENF), 197–232 (ERKRDFEKIFAHYDVSKTGALEGPEVDGFVKDMMEL), and 240–276 (VDLDKFREILLRHCDVNKDGKIQKSELALCLGLKINP). Ca(2+) is bound by residues aspartate 71, serine 73, aspartate 75, histidine 77, glutamate 82, aspartate 118, aspartate 120, serine 122, glutamate 129, aspartate 162, asparagine 164, aspartate 166, arginine 168, aspartate 173, aspartate 210, serine 212, threonine 214, glutamate 221, aspartate 254, asparagine 256, aspartate 258, lysine 260, and glutamate 265.

The protein resides in the cytoplasm. Its subcellular location is the secreted. It is found in the cytoplasmic vesicle. It localises to the secretory vesicle membrane. The protein is Secretagogin (SCGN) of Sus scrofa (Pig).